A 397-amino-acid polypeptide reads, in one-letter code: Chorismate synthase (397 aa).

NADP(+)-binding residues include arginine 40 and arginine 46. Residues 129 to 131 (RSS), 257 to 258 (QA), glycine 302, 317 to 321 (KPISS), and arginine 343 each bind FMN.

The protein belongs to the chorismate synthase family. As to quaternary structure, homotetramer. FMNH2 serves as cofactor.

It catalyses the reaction 5-O-(1-carboxyvinyl)-3-phosphoshikimate = chorismate + phosphate. It functions in the pathway metabolic intermediate biosynthesis; chorismate biosynthesis; chorismate from D-erythrose 4-phosphate and phosphoenolpyruvate: step 7/7. In terms of biological role, catalyzes the anti-1,4-elimination of the C-3 phosphate and the C-6 proR hydrogen from 5-enolpyruvylshikimate-3-phosphate (EPSP) to yield chorismate, which is the branch point compound that serves as the starting substrate for the three terminal pathways of aromatic amino acid biosynthesis. This reaction introduces a second double bond into the aromatic ring system. This Chlorobium phaeobacteroides (strain DSM 266 / SMG 266 / 2430) protein is Chorismate synthase.